A 148-amino-acid polypeptide reads, in one-letter code: UPF0756 membrane protein YeaL (148 aa).

4 helical membrane-spanning segments follow: residues Ala-14–Val-34, Leu-51–Leu-71, Leu-86–Met-106, and Val-121–Val-141.

It belongs to the UPF0756 family.

It is found in the cell membrane. This is UPF0756 membrane protein YeaL from Salmonella choleraesuis (strain SC-B67).